The chain runs to 521 residues: Medium/long-chain-fatty-acid--[acyl-carrier-protein] ligase MbtM (521 aa).

This sequence belongs to the ATP-dependent AMP-binding enzyme family.

It carries out the reaction a long-chain fatty acid + holo-[ACP] + ATP = a long-chain fatty acyl-[ACP] + AMP + diphosphate. It catalyses the reaction a medium-chain fatty acid + holo-[ACP] + ATP = a medium-chain fatty acyl-[ACP] + AMP + diphosphate. It functions in the pathway siderophore biosynthesis; mycobactin biosynthesis. Activates lipidic moieties required for mycobactin biosynthesis. Converts medium- to long-chain aliphatic fatty acids into acyl adenylate, which is further transferred on to the phosphopantetheine arm of the carrier protein MbtL. This chain is Medium/long-chain-fatty-acid--[acyl-carrier-protein] ligase MbtM (mbtM), found in Mycobacterium bovis (strain ATCC BAA-935 / AF2122/97).